The chain runs to 192 residues: GTP cyclohydrolase-2 (192 aa).

Residue R50 to E54 participates in GTP binding. The Zn(2+) site is built by C55, C66, and C68. GTP-binding positions include E92–R94 and T114. D126 serves as the catalytic Proton acceptor. Residue R128 is the Nucleophile of the active site. T149 and K154 together coordinate GTP.

It belongs to the GTP cyclohydrolase II family. The cofactor is Zn(2+).

The catalysed reaction is GTP + 4 H2O = 2,5-diamino-6-hydroxy-4-(5-phosphoribosylamino)-pyrimidine + formate + 2 phosphate + 3 H(+). It participates in cofactor biosynthesis; riboflavin biosynthesis; 5-amino-6-(D-ribitylamino)uracil from GTP: step 1/4. Its function is as follows. Catalyzes the conversion of GTP to 2,5-diamino-6-ribosylamino-4(3H)-pyrimidinone 5'-phosphate (DARP), formate and pyrophosphate. The chain is GTP cyclohydrolase-2 from Helicobacter pylori (strain J99 / ATCC 700824) (Campylobacter pylori J99).